Here is a 387-residue protein sequence, read N- to C-terminus: Erythronate-4-phosphate dehydrogenase (387 aa).

2 residues coordinate substrate: serine 45 and threonine 67. NAD(+) is bound at residue aspartate 147. The active site involves arginine 208. Aspartate 232 serves as a coordination point for NAD(+). The active site involves glutamate 237. The active-site Proton donor is histidine 254. Position 257 (glycine 257) interacts with NAD(+). Tyrosine 258 lines the substrate pocket.

It belongs to the D-isomer specific 2-hydroxyacid dehydrogenase family. PdxB subfamily. Homodimer.

Its subcellular location is the cytoplasm. The enzyme catalyses 4-phospho-D-erythronate + NAD(+) = (R)-3-hydroxy-2-oxo-4-phosphooxybutanoate + NADH + H(+). It functions in the pathway cofactor biosynthesis; pyridoxine 5'-phosphate biosynthesis; pyridoxine 5'-phosphate from D-erythrose 4-phosphate: step 2/5. Its function is as follows. Catalyzes the oxidation of erythronate-4-phosphate to 3-hydroxy-2-oxo-4-phosphonooxybutanoate. The chain is Erythronate-4-phosphate dehydrogenase from Shewanella woodyi (strain ATCC 51908 / MS32).